The sequence spans 206 residues: Large ribosomal subunit protein eL8 (206 aa).

This sequence belongs to the eukaryotic ribosomal protein eL8 family. In terms of assembly, component of the large ribosomal subunit.

It is found in the cytoplasm. The chain is Large ribosomal subunit protein eL8 (RPL7A) from Encephalitozoon cuniculi (strain GB-M1) (Microsporidian parasite).